Here is a 737-residue protein sequence, read N- to C-terminus: Protein kinase C epsilon type (737 aa).

The C2 domain maps to 1 to 117; it reads MVVFNGLLKI…NGSRHFEDWI (117 aa). A Phosphoserine modification is found at Ser-62. Residues 169-220 form a Phorbol-ester/DAG-type 1 zinc finger; it reads GHKFMATYLRQPTYCSHCRDFIWGVIGKQGYQCQVCTCVVHKRCHELIITKC. Residues 223–228 carry the Interaction with actin motif; sequence LKKQET. Position 228 is a phosphothreonine (Thr-228). Residue Ser-234 is modified to Phosphoserine. The Phorbol-ester/DAG-type 2 zinc finger occupies 242-292; the sequence is PHKFGIHNYKVPTFCDHCGSLLWGLLRQGLQCKVCKMNVHRRCETNVAPNC. Thr-309 is modified (phosphothreonine). Positions 310–356 are disordered; the sequence is PDKITNSGQRRKKLAAGAESPQPASGNSPSEDDRSKSAPTSPCDQEL. Phosphoserine occurs at positions 316, 329, 337, and 346. Residue Thr-349 is modified to Phosphothreonine. A Phosphoserine; by MAPK11 and MAPK14 modification is found at Ser-350. A phosphoserine mark is found at Ser-368 and Ser-388. The interval 369–398 is disordered; that stretch reads FDNRGEEHRASSSTDGQLASPGENGEVRQG. Residues 408–668 form the Protein kinase domain; sequence FNFIKVLGKG…EDAIKQHPFF (261 aa). Residues 414 to 422 and Lys-437 contribute to the ATP site; that span reads LGKGSFGKV. Asp-532 functions as the Proton acceptor in the catalytic mechanism. The residue at position 566 (Thr-566) is a Phosphothreonine; by PDPK1. Positions 669–737 constitute an AGC-kinase C-terminal domain; that stretch reads KEIDWVLLEQ…FSYFGEDLMP (69 aa). Phosphothreonine occurs at positions 703 and 710. The residue at position 729 (Ser-729) is a Phosphoserine.

The protein belongs to the protein kinase superfamily. AGC Ser/Thr protein kinase family. PKC subfamily. As to quaternary structure, forms a ternary complex with TRIM63 and RACK1/GN2BL1. Can form a complex with PDLIM5 and N-type calcium channel. Interacts with COPB1. Interacts with DGKQ. Interacts with STAT3. Interacts with YWHAB. Interacts with HSP90AB1; promotes functional activation in a heat shock-dependent manner. Interacts (via phorbol-ester/DAG-type 2 domain) with PRPH and VIM. Interacts with NLRP5/MATER. In terms of processing, phosphorylation on Thr-566 by PDPK1 triggers autophosphorylation on Ser-729. Phosphorylation in the hinge domain at Ser-350 by MAPK11 or MAPK14, Ser-346 by GSK3B and Ser-368 by autophosphorylation is required for interaction with YWHAB. In response to growth factors, phosphorylated at Thr-703 and Ser-729 by the mTORC2 complex, promoting autophosphorylation and activation of PRKCE.

Its subcellular location is the cytoplasm. It localises to the cytoskeleton. It is found in the cell membrane. The protein localises to the perinuclear region. The protein resides in the nucleus. The catalysed reaction is L-seryl-[protein] + ATP = O-phospho-L-seryl-[protein] + ADP + H(+). It carries out the reaction L-threonyl-[protein] + ATP = O-phospho-L-threonyl-[protein] + ADP + H(+). Its activity is regulated as follows. Novel PKCs (PRKCD, PRKCE, PRKCH and PRKCQ) are calcium-insensitive, but activated by diacylglycerol (DAG) and phosphatidylserine. Three specific sites; Thr-566 (activation loop of the kinase domain), Thr-710 (turn motif) and Ser-729 (hydrophobic region), need to be phosphorylated for its full activation. Functionally, calcium-independent, phospholipid- and diacylglycerol (DAG)-dependent serine/threonine-protein kinase that plays essential roles in the regulation of multiple cellular processes linked to cytoskeletal proteins, such as cell adhesion, motility, migration and cell cycle, functions in neuron growth and ion channel regulation, and is involved in immune response, cancer cell invasion and regulation of apoptosis. Mediates cell adhesion to the extracellular matrix via integrin-dependent signaling, by mediating angiotensin-2-induced activation of integrin beta-1 (ITGB1) in cardiac fibroblasts. Phosphorylates MARCKS, which phosphorylates and activates PTK2/FAK, leading to the spread of cardiomyocytes. Involved in the control of the directional transport of ITGB1 in mesenchymal cells by phosphorylating vimentin (VIM), an intermediate filament (IF) protein. In epithelial cells, associates with and phosphorylates keratin-8 (KRT8), which induces targeting of desmoplakin at desmosomes and regulates cell-cell contact. Phosphorylates IQGAP1, which binds to CDC42, mediating epithelial cell-cell detachment prior to migration. During cytokinesis, forms a complex with YWHAB, which is crucial for daughter cell separation, and facilitates abscission by a mechanism which may implicate the regulation of RHOA. In cardiac myocytes, regulates myofilament function and excitation coupling at the Z-lines, where it is indirectly associated with F-actin via interaction with COPB1. During endothelin-induced cardiomyocyte hypertrophy, mediates activation of PTK2/FAK, which is critical for cardiomyocyte survival and regulation of sarcomere length. Plays a role in the pathogenesis of dilated cardiomyopathy via persistent phosphorylation of troponin I (TNNI3). Involved in nerve growth factor (NFG)-induced neurite outgrowth and neuron morphological change independently of its kinase activity, by inhibition of RHOA pathway, activation of CDC42 and cytoskeletal rearrangement. May be involved in presynaptic facilitation by mediating phorbol ester-induced synaptic potentiation. Phosphorylates gamma-aminobutyric acid receptor subunit gamma-2 (GABRG2), which reduces the response of GABA receptors to ethanol and benzodiazepines and may mediate acute tolerance to the intoxicating effects of ethanol. Upon PMA treatment, phosphorylates the capsaicin- and heat-activated cation channel TRPV1, which is required for bradykinin-induced sensitization of the heat response in nociceptive neurons. Is able to form a complex with PDLIM5 and N-type calcium channel, and may enhance channel activities and potentiates fast synaptic transmission by phosphorylating the pore-forming alpha subunit CACNA1B (CaV2.2). Downstream of TLR4, plays an important role in the lipopolysaccharide (LPS)-induced immune response by phosphorylating and activating TICAM2/TRAM, which in turn activates the transcription factor IRF3 and subsequent cytokines production. In differentiating erythroid progenitors, is regulated by EPO and controls the protection against the TNFSF10/TRAIL-mediated apoptosis, via BCL2. May be involved in the regulation of the insulin-induced phosphorylation and activation of AKT1. Phosphorylates NLRP5/MATER and may thereby modulate AKT pathway activation in cumulus cells. Phosphorylates and activates LRRK1, which phosphorylates RAB proteins involved in intracellular trafficking. The sequence is that of Protein kinase C epsilon type (Prkce) from Rattus norvegicus (Rat).